The following is a 229-amino-acid chain: Orotate phosphoribosyltransferase (229 aa).

5-phospho-alpha-D-ribose 1-diphosphate is bound by residues arginine 107, lysine 108, lysine 111, histidine 113, and glutamate 133–serine 141. Threonine 137 provides a ligand contact to orotate.

This sequence belongs to the purine/pyrimidine phosphoribosyltransferase family. PyrE subfamily. Homodimer. Mg(2+) serves as cofactor.

The enzyme catalyses orotidine 5'-phosphate + diphosphate = orotate + 5-phospho-alpha-D-ribose 1-diphosphate. The protein operates within pyrimidine metabolism; UMP biosynthesis via de novo pathway; UMP from orotate: step 1/2. Catalyzes the transfer of a ribosyl phosphate group from 5-phosphoribose 1-diphosphate to orotate, leading to the formation of orotidine monophosphate (OMP). The polypeptide is Orotate phosphoribosyltransferase (Rhizobium etli (strain ATCC 51251 / DSM 11541 / JCM 21823 / NBRC 15573 / CFN 42)).